The primary structure comprises 626 residues: Carnitine O-acetyltransferase (626 aa).

Lys93 carries the post-translational modification N6-succinyllysine. Lys261 carries the post-translational modification N6-acetyllysine; alternate. Lys261 carries the post-translational modification N6-succinyllysine; alternate. Residue Lys268 is modified to N6-acetyllysine. Catalysis depends on His343, which acts as the Proton acceptor. CoA-binding positions include Lys419 and 423–430 (KSEKLSPD). Residues Tyr452 and Ser454 each coordinate (R)-carnitine. Ser456 is a CoA binding site. Thr465 contacts (R)-carnitine. Residues Arg504 and Gln555 each coordinate CoA. The short motif at 624-626 (AKL) is the Microbody targeting signal element.

This sequence belongs to the carnitine/choline acetyltransferase family. As to quaternary structure, monomer. As to expression, mostly in skeletal muscle, less in heart, liver and pancreas, only weakly detectable in brain, placenta, lung and kidney.

The protein localises to the endoplasmic reticulum. The protein resides in the peroxisome. It is found in the mitochondrion inner membrane. Its subcellular location is the mitochondrion. The enzyme catalyses (R)-carnitine + acetyl-CoA = O-acetyl-(R)-carnitine + CoA. It carries out the reaction propanoyl-CoA + (R)-carnitine = O-propanoyl-(R)-carnitine + CoA. It catalyses the reaction butanoyl-CoA + (R)-carnitine = O-butanoyl-(R)-carnitine + CoA. The catalysed reaction is hexanoyl-CoA + (R)-carnitine = O-hexanoyl-(R)-carnitine + CoA. The enzyme catalyses octanoyl-CoA + (R)-carnitine = O-octanoyl-(R)-carnitine + CoA. It carries out the reaction decanoyl-CoA + (R)-carnitine = O-decanoyl-(R)-carnitine + CoA. It catalyses the reaction 3-methylbutanoyl-CoA + (R)-carnitine = O-3-methylbutanoyl-(R)-carnitine + CoA. The catalysed reaction is 2-methylpropanoyl-CoA + (R)-carnitine = O-isobutanoyl-(R)-carnitine + CoA. The enzyme catalyses 2-methylbutanoyl-CoA + (R)-carnitine = O-2-methylbutanoyl-(R)-carnitine + CoA. It carries out the reaction acetoacetyl-CoA + (R)-carnitine = O-3-oxobutanoyl-(R)-carnitine + CoA. It catalyses the reaction 3-hydroxybutanoyl-CoA + (R)-carnitine = O-3-hydroxybutanoyl-(R)-carnitine + CoA. The catalysed reaction is 4,8-dimethylnonanoyl-CoA + (R)-carnitine = O-4,8-dimethylnonanoyl-(R)-carnitine + CoA. The enzyme catalyses 2,6-dimethylheptanoyl-CoA + (R)-carnitine = O-2,6-dimethylheptanoyl-(R)-carnitine + CoA. Its function is as follows. Catalyzes the reversible transfer of acyl groups from carnitine to coenzyme A (CoA) and regulates the acyl-CoA/CoA ratio. Also plays a crucial role in the transport of fatty acids for beta-oxidation. Responsible for the synthesis of short- and branched-chain acylcarnitines. Active towards some branched-chain amino acid oxidation pathway (BCAAO) intermediates. Trans-2-enoyl-CoAs and 2-methylacyl-CoAs are poor substrates. The chain is Carnitine O-acetyltransferase from Homo sapiens (Human).